The sequence spans 684 residues: Putative glucan endo-1,3-beta-glucosidase btgC (684 aa).

Residues 1–10 (MAGVNRSFSY) are compositionally biased toward polar residues. Disordered stretches follow at residues 1–38 (MAGV…LYST), 124–143 (AERD…APPD), and 157–182 (DSYS…TTPS). Topologically, residues 1–302 (MAGVNRSFSY…HIIGGGSRKR (302 aa)) are cytoplasmic. Residues 12–32 (RGDDALLRDDEREISPLRSAE) show a composition bias toward basic and acidic residues. The chain crosses the membrane as a helical; Signal-anchor for type II membrane protein span at residues 303–323 (GWIVGLILAAVIVAAIVGGAV). At 324-684 (GGILGHQEHD…IPDCGGKTIT (361 aa)) the chain is on the extracellular side. Residues 330–358 (QEHDGDTSSSSSSSSSSGTGSGGSDKGDG) are disordered. Residues 336–347 (TSSSSSSSSSSG) are compositionally biased toward low complexity. N-linked (GlcNAc...) asparagine glycans are attached at residues Asn404, Asn427, Asn455, and Asn474. Glu487 acts as the Proton donor in catalysis. Catalysis depends on Glu586, which acts as the Nucleophile. Asn631 is a glycosylation site (N-linked (GlcNAc...) asparagine).

This sequence belongs to the glycosyl hydrolase 17 family.

The protein resides in the cell membrane. It carries out the reaction Hydrolysis of (1-&gt;3)-beta-D-glucosidic linkages in (1-&gt;3)-beta-D-glucans.. Functionally, glucanases play a role in cell expansion during growth, in cell-cell fusion during mating, and in spore release during sporulation. This enzyme may be involved in beta-glucan degradation. Active on laminarin and lichenan. In Aspergillus niger (strain ATCC MYA-4892 / CBS 513.88 / FGSC A1513), this protein is Putative glucan endo-1,3-beta-glucosidase btgC (btgC).